A 619-amino-acid chain; its full sequence is DNA mismatch repair protein MutL (619 aa).

This sequence belongs to the DNA mismatch repair MutL/HexB family.

In terms of biological role, this protein is involved in the repair of mismatches in DNA. It is required for dam-dependent methyl-directed DNA mismatch repair. May act as a 'molecular matchmaker', a protein that promotes the formation of a stable complex between two or more DNA-binding proteins in an ATP-dependent manner without itself being part of a final effector complex. The polypeptide is DNA mismatch repair protein MutL (Xylella fastidiosa (strain 9a5c)).